The primary structure comprises 257 residues: Synaptosomal-associated protein 29 (257 aa).

Residues 1-42 form a disordered region; it reads MSGYPKSYNPFDDDVEDEDTRPAPWKDARDLPDGPDPPIDRQ. Residues 20-32 show a composition bias toward basic and acidic residues; that stretch reads TRPAPWKDARDLP. Residues Ser-77, Ser-78, Ser-114, Ser-163, Ser-181, Ser-203, and Ser-209 each carry the phosphoserine modification. In terms of domain architecture, t-SNARE coiled-coil homology spans 195–257; sequence RAYHQKIDSN…KSTEKKVRQL (63 aa).

This sequence belongs to the SNAP-25 family. Forms a SNARE complex, composed of VAMP8, SNAP29 and STX17, involved in fusion of autophagosome with lysosome. Interacts with multiple syntaxins including STX6. Interacts with EIPR1. Interacts with STX17; this interaction is increased in the absence of TMEM39A. Widely expressed.

It localises to the cytoplasm. The protein resides in the golgi apparatus membrane. Its subcellular location is the cytoplasmic vesicle. It is found in the autophagosome membrane. The protein localises to the cell projection. It localises to the cilium membrane. SNAREs, soluble N-ethylmaleimide-sensitive factor-attachment protein receptors, are essential proteins for fusion of cellular membranes. SNAREs localized on opposing membranes assemble to form a trans-SNARE complex, an extended, parallel four alpha-helical bundle that drives membrane fusion. SNAP29 is a SNARE involved in autophagy through the direct control of autophagosome membrane fusion with the lysososome membrane. Also plays a role in ciliogenesis by regulating membrane fusions. This chain is Synaptosomal-associated protein 29, found in Rattus norvegicus (Rat).